A 192-amino-acid polypeptide reads, in one-letter code: Succinate dehydrogenase cytochrome b560 subunit, mitochondrial (192 aa).

The N-terminal 27 residues, 1–27, are a transit peptide targeting the mitochondrion; that stretch reads MFGRTLNTFTSRNAPLVRNFDKFIVNN. The Mitochondrial matrix portion of the chain corresponds to 48–83; the sequence is YSTQAKKPFTITEKRIDELKTPYQPTSPHLTIYKFP. Residues 84–113 traverse the membrane as a helical segment; that stretch reads LPAVMSIMHRATGICLALGITGLAGVTLFA. The Mitochondrial intermembrane segment spans residues 114–131; sequence PHDAIHYIQLLHTQYPAL. The chain crosses the membrane as a helical span at residues 132–156; it reads VYPAKFAVALPLTYHFCTGVRHIIW. Residue histidine 146 participates in heme b binding. The Mitochondrial matrix segment spans residues 157–164; that stretch reads DETVKGLS. Residues 165 to 186 traverse the membrane as a helical segment; that stretch reads ISQIESSGKVLLAVVAVLSTIF. Over 187–189 the chain is Mitochondrial intermembrane; that stretch reads TFV.

Belongs to the cytochrome b560 family. Component of complex II composed of four subunits: the flavoprotein (FP) sdha, iron-sulfur protein (IP) sdhb, and a cytochrome b560 composed of sdhc and sdhd. Requires heme b as cofactor.

The protein resides in the mitochondrion inner membrane. The protein operates within carbohydrate metabolism; tricarboxylic acid cycle. Functionally, membrane-anchoring subunit of succinate dehydrogenase (SDH) that is involved in complex II of the mitochondrial electron transport chain and is responsible for transferring electrons from succinate to ubiquinone (coenzyme Q). This chain is Succinate dehydrogenase cytochrome b560 subunit, mitochondrial (sdhC), found in Dictyostelium discoideum (Social amoeba).